Consider the following 331-residue polypeptide: DNA-directed RNA polymerase subunit alpha (331 aa).

Residues 1-226 (MLIAQRPTLT…ELFGLARELN (226 aa)) are alpha N-terminal domain (alpha-NTD). An alpha C-terminal domain (alpha-CTD) region spans residues 243-331 (LSSELSMPIE…SYDEDETTTN (89 aa)).

This sequence belongs to the RNA polymerase alpha chain family. Homodimer. The RNAP catalytic core consists of 2 alpha, 1 beta, 1 beta' and 1 omega subunit. When a sigma factor is associated with the core the holoenzyme is formed, which can initiate transcription.

It catalyses the reaction RNA(n) + a ribonucleoside 5'-triphosphate = RNA(n+1) + diphosphate. Its function is as follows. DNA-dependent RNA polymerase catalyzes the transcription of DNA into RNA using the four ribonucleoside triphosphates as substrates. The chain is DNA-directed RNA polymerase subunit alpha from Clavibacter michiganensis subsp. michiganensis (strain NCPPB 382).